The sequence spans 316 residues: Cytochrome c biogenesis protein CcsA (316 aa).

7 helical membrane passes run 15–35 (FSIC…TTIL), 44–64 (GIIT…IYSG), 71–91 (LYES…VAYL), 142–162 (MILS…LLVI), 220–240 (VISL…VWAN), 247–267 (WSWD…AIYL), and 281–301 (AIVA…VNLL).

This sequence belongs to the CcmF/CycK/Ccl1/NrfE/CcsA family. May interact with Ccs1.

The protein localises to the plastid. Its subcellular location is the chloroplast thylakoid membrane. Its function is as follows. Required during biogenesis of c-type cytochromes (cytochrome c6 and cytochrome f) at the step of heme attachment. The polypeptide is Cytochrome c biogenesis protein CcsA (Trachelium caeruleum (Blue throatwort)).